We begin with the raw amino-acid sequence, 254 residues long: Large ribosomal subunit protein uL2 (254 aa).

It belongs to the universal ribosomal protein uL2 family. Component of the large ribosomal subunit. Mature ribosomes consist of a small (40S) and a large (60S) subunit. The 40S subunit contains about 32 different proteins and 1 molecule of RNA (18S). The 60S subunit contains 45 different proteins and 3 molecules of RNA (25S, 5.8S and 5S).

It is found in the cytoplasm. Its function is as follows. Component of the ribosome, a large ribonucleoprotein complex responsible for the synthesis of proteins in the cell. The small ribosomal subunit (SSU) binds messenger RNAs (mRNAs) and translates the encoded message by selecting cognate aminoacyl-transfer RNA (tRNA) molecules. The large subunit (LSU) contains the ribosomal catalytic site termed the peptidyl transferase center (PTC), which catalyzes the formation of peptide bonds, thereby polymerizing the amino acids delivered by tRNAs into a polypeptide chain. The nascent polypeptides leave the ribosome through a tunnel in the LSU and interact with protein factors that function in enzymatic processing, targeting, and the membrane insertion of nascent chains at the exit of the ribosomal tunnel. The polypeptide is Large ribosomal subunit protein uL2 (Candida albicans (strain SC5314 / ATCC MYA-2876) (Yeast)).